The primary structure comprises 270 residues: Putative phosphoenolpyruvate synthase regulatory protein (270 aa).

150-157 (GVSRCGKT) contributes to the ADP binding site.

This sequence belongs to the pyruvate, phosphate/water dikinase regulatory protein family. PSRP subfamily.

It carries out the reaction [pyruvate, water dikinase] + ADP = [pyruvate, water dikinase]-phosphate + AMP + H(+). It catalyses the reaction [pyruvate, water dikinase]-phosphate + phosphate + H(+) = [pyruvate, water dikinase] + diphosphate. Functionally, bifunctional serine/threonine kinase and phosphorylase involved in the regulation of the phosphoenolpyruvate synthase (PEPS) by catalyzing its phosphorylation/dephosphorylation. This Shewanella piezotolerans (strain WP3 / JCM 13877) protein is Putative phosphoenolpyruvate synthase regulatory protein.